Here is a 245-residue protein sequence, read N- to C-terminus: 1-(5-phosphoribosyl)-5-[(5-phosphoribosylamino)methylideneamino] imidazole-4-carboxamide isomerase (245 aa).

D7 serves as the catalytic Proton acceptor. D129 (proton donor) is an active-site residue.

The protein belongs to the HisA/HisF family.

It localises to the cytoplasm. It carries out the reaction 1-(5-phospho-beta-D-ribosyl)-5-[(5-phospho-beta-D-ribosylamino)methylideneamino]imidazole-4-carboxamide = 5-[(5-phospho-1-deoxy-D-ribulos-1-ylimino)methylamino]-1-(5-phospho-beta-D-ribosyl)imidazole-4-carboxamide. The protein operates within amino-acid biosynthesis; L-histidine biosynthesis; L-histidine from 5-phospho-alpha-D-ribose 1-diphosphate: step 4/9. The polypeptide is 1-(5-phosphoribosyl)-5-[(5-phosphoribosylamino)methylideneamino] imidazole-4-carboxamide isomerase (Salmonella heidelberg (strain SL476)).